Here is an 879-residue protein sequence, read N- to C-terminus: Alanine--tRNA ligase 1 (879 aa).

Positions 566, 570, 668, and 672 each coordinate Zn(2+).

Belongs to the class-II aminoacyl-tRNA synthetase family. Zn(2+) serves as cofactor.

It localises to the cytoplasm. The enzyme catalyses tRNA(Ala) + L-alanine + ATP = L-alanyl-tRNA(Ala) + AMP + diphosphate. In terms of biological role, catalyzes the attachment of alanine to tRNA(Ala) in a two-step reaction: alanine is first activated by ATP to form Ala-AMP and then transferred to the acceptor end of tRNA(Ala). Also edits incorrectly charged Ser-tRNA(Ala) and Gly-tRNA(Ala) via its editing domain. The chain is Alanine--tRNA ligase 1 from Lachnoclostridium phytofermentans (strain ATCC 700394 / DSM 18823 / ISDg) (Clostridium phytofermentans).